Here is a 516-residue protein sequence, read N- to C-terminus: BAR/IMD domain-containing adapter protein 2-like 2 (516 aa).

Residues 1–227 form the IMD domain; sequence MSGVNSDLLH…PTPLDQEAQL (227 aa). The disordered stretch occupies residues 200 to 273; that stretch reads ADGWKEKVSE…SSSVGESLGL (74 aa). Over residues 201–212 the composition is skewed to basic and acidic residues; that stretch reads DGWKEKVSESRS. Polar residues predominate over residues 226–236; that stretch reads QLKSSVGSLLQ. A compositionally biased stretch (basic and acidic residues) spans 238–247; it reads GDREMDREPL. Positions 249 to 270 are enriched in low complexity; it reads RVPSRAPSPLPSRSRSSSVGES. The SH3 domain maps to 274–337; that stretch reads GGGRSMRAIV…PAAYVASTED (64 aa). Residues 355–376 are compositionally biased toward polar residues; that stretch reads LLEPTSQSESDTQTYSEVSSPV. Residues 355-516 are disordered; the sequence is LLEPTSQSES…TNDRSAPRIQ (162 aa). Positions 434–450 are enriched in basic and acidic residues; it reads PDRRAESHFESKVELKN. Residues 454-465 show a composition bias toward pro residues; it reads LPPPAPPLPNSP.

The protein localises to the cell membrane. Its function is as follows. Phosphoinositides-binding protein that induces the formation of planar or gently curved membrane structures. The polypeptide is BAR/IMD domain-containing adapter protein 2-like 2 (baiap2l2) (Danio rerio (Zebrafish)).